The chain runs to 80 residues: uncharacterized protein (80 aa).

Residues 10-29 (FVAREYPLVVVPFIYFVLFL) form a helical membrane-spanning segment.

It localises to the membrane. This is an uncharacterized protein from Saccharomyces cerevisiae (strain ATCC 204508 / S288c) (Baker's yeast).